Here is a 291-residue protein sequence, read N- to C-terminus: ATP synthase gamma chain (291 aa).

The protein belongs to the ATPase gamma chain family. F-type ATPases have 2 components, CF(1) - the catalytic core - and CF(0) - the membrane proton channel. CF(1) has five subunits: alpha(3), beta(3), gamma(1), delta(1), epsilon(1). CF(0) has three main subunits: a, b and c.

Its subcellular location is the cell inner membrane. Produces ATP from ADP in the presence of a proton gradient across the membrane. The gamma chain is believed to be important in regulating ATPase activity and the flow of protons through the CF(0) complex. This Ralstonia nicotianae (strain ATCC BAA-1114 / GMI1000) (Ralstonia solanacearum) protein is ATP synthase gamma chain.